The following is a 97-amino-acid chain: U-reduvitoxin-Pr10a (97 aa).

Positions 1–18 (MKTALFLVFALAFIAVEG) are cleaved as a signal peptide. 2 Pacifastin domains span residues 22-59 (KACS…CPPR) and 62-97 (KQSC…RLCW). 3 cysteine pairs are disulfide-bonded: Cys24–Cys42, Cys37–Cys56, and Cys40–Cys51. The segment at 57–59 (PPR) is pro-Pro-Arg motif necessary for proteolytic processing. Disulfide bonds link Cys65-Cys82, Cys77-Cys96, and Cys80-Cys91.

Belongs to the protease inhibitor I19 family. As to expression, expressed by the venom gland.

The protein resides in the secreted. Inhibits trypsin activity and prophenoloxidase (PPO) activation, an enzyme essential for both clotting and insect innate immune responses. It does not inhibit activity of chymotrypsin and protease K, and has no effect on phenoloxidase (PO) activity. The protein is U-reduvitoxin-Pr10a of Platymeris rhadamanthus (Red spot assassin bug).